We begin with the raw amino-acid sequence, 348 residues long: Zinc transporter ZIP13 (348 aa).

Residues 1-45 lie on the Cytoplasmic side of the membrane; sequence MMIQTAVAQAKTAPAGPGPWSIKDLVDLQYLDELMSIDNLDVWFC. The helical transmembrane segment at 46–66 threads the bilayer; it reads SLVGSIAIGLSGIFPLLVIPI. Residues 67-83 are Lumenal-facing; that stretch reads EAGTALKTEAGCQKLKK. The chain crosses the membrane as a helical span at residues 84-104; the sequence is LLSFAIGGLLGDVFLHLLPEA. The Cytoplasmic portion of the chain corresponds to 105-118; that stretch reads WAYTSSPGGSHRHY. A helical transmembrane segment spans residues 119-139; that stretch reads CTQGLWVIGGLMSFLTLEKMF. Residues 140–219 lie on the Lumenal side of the membrane; that stretch reads PDEVGDPETK…CIDNFTHGLA (80 aa). The tract at residues 144–192 is disordered; that stretch reads GDPETKTSFQRTTSSSSDLSSQFSVSPQTNGICSNNNSDSKPKTDISPY. The segment covering 149–169 has biased composition (low complexity); sequence KTSFQRTTSSSSDLSSQFSVS. The span at 170–182 shows a compositional bias: polar residues; it reads PQTNGICSNNNSD. Residues 220–240 form a helical membrane-spanning segment; that stretch reads VAGSFLVSRKVGFLTTFAILL. An XEXPHE-motif motif is present at residues 241-246; it reads HEIPHE. Residues 241-262 lie on the Cytoplasmic side of the membrane; that stretch reads HEIPHEVGDFAILLRAGFDRWK. The helical transmembrane segment at 263–283 threads the bilayer; it reads AARMQLSTALGGVLGACFALC. The Lumenal portion of the chain corresponds to 284-294; sequence SQSQHGAENAT. The chain crosses the membrane as a helical span at residues 295-315; it reads TWILPFTSGGFLYIALVNVVP. Over 316–326 the chain is Cytoplasmic; the sequence is DLLEETNPRNS. The chain crosses the membrane as a helical span at residues 327 to 347; that stretch reads LLQVLLLFSGIGVMALLSIAM. Asp-348 is a topological domain (lumenal).

Belongs to the ZIP transporter (TC 2.A.5) family. In terms of assembly, homodimer.

Its subcellular location is the golgi apparatus membrane. The protein localises to the cytoplasmic vesicle membrane. The protein resides in the endoplasmic reticulum membrane. It carries out the reaction Zn(2+)(in) = Zn(2+)(out). Its function is as follows. Functions as a zinc transporter transporting Zn(2+) from the Golgi apparatus to the cytosol and thus influences the zinc level at least in areas of the cytosol. In Danio rerio (Zebrafish), this protein is Zinc transporter ZIP13.